A 259-amino-acid polypeptide reads, in one-letter code: MADS-box protein ZMM17 (259 aa).

The region spanning 1–61 (MGRGKIEIKR…GKMFEYCSPA (61 aa)) is the MADS-box domain. Residues 85-175 (DQQILLEMTR…YRMINENQQA (91 aa)) form the K-box domain. Residues 237 to 259 (PTQPNLQDPAAPCGGLHGHGLQL) form a disordered region.

In terms of tissue distribution, strong expression in female inflorescences (ears), but also weak expression in male inflorescences (tassels). At early stages of the development of the female spiklet, expressed in all organ primordia but later restricted to the ovule and the developing silk. At very late stages of development, expression becomes restricted to parts of the silk.

It localises to the nucleus. Its function is as follows. Probable transcription factor. This is MADS-box protein ZMM17 (M17) from Zea mays (Maize).